The following is a 118-amino-acid chain: MARIAGINIPDHKHAVIALTAIYGIGKTRSQAICAAAGIAEDVKIRELSEEQIDKLRDEVGKFTVEGDLRREVTLNIKRLLDLGCYRGLRHRRSLPVRGQRTKTNARTRKGPRKPIKK.

The tract at residues 94–118 is disordered; it reads SLPVRGQRTKTNARTRKGPRKPIKK.

It belongs to the universal ribosomal protein uS13 family. As to quaternary structure, part of the 30S ribosomal subunit. Forms a loose heterodimer with protein S19. Forms two bridges to the 50S subunit in the 70S ribosome.

In terms of biological role, located at the top of the head of the 30S subunit, it contacts several helices of the 16S rRNA. In the 70S ribosome it contacts the 23S rRNA (bridge B1a) and protein L5 of the 50S subunit (bridge B1b), connecting the 2 subunits; these bridges are implicated in subunit movement. Contacts the tRNAs in the A and P-sites. The polypeptide is Small ribosomal subunit protein uS13 (Haemophilus influenzae (strain 86-028NP)).